The following is a 168-amino-acid chain: G/U mismatch-specific DNA glycosylase (168 aa).

It belongs to the uracil-DNA glycosylase (UDG) superfamily. TDG/mug family. In terms of assembly, binds DNA as a monomer.

The protein localises to the cytoplasm. It carries out the reaction Specifically hydrolyzes mismatched double-stranded DNA and polynucleotides, releasing free uracil.. Its function is as follows. Excises ethenocytosine and uracil, which can arise by alkylation or deamination of cytosine, respectively, from the corresponding mispairs with guanine in ds-DNA. It is capable of hydrolyzing the carbon-nitrogen bond between the sugar-phosphate backbone of the DNA and the mispaired base. The complementary strand guanine functions in substrate recognition. Required for DNA damage lesion repair in stationary-phase cells. The protein is G/U mismatch-specific DNA glycosylase of Escherichia coli O139:H28 (strain E24377A / ETEC).